Reading from the N-terminus, the 187-residue chain is Pre-mRNA-splicing factor cwf7 (187 aa).

The protein belongs to the SPF27 family. As to quaternary structure, belongs to the 40S cdc5-associated complex (or cwf complex), a spliceosome sub-complex reminiscent of a late-stage spliceosome composed of the U2, U5 and U6 snRNAs and at least brr2, cdc5, cwf2/prp3, cwf3/syf1, cwf4/syf3, cwf5/ecm2, spp42/cwf6, cwf7/spf27, cwf8, cwf9, cwf10, cwf11, cwf12, prp45/cwf13, cwf14, cwf15, cwf16, cwf17, cwf18, cwf19, cwf20, cwf21, cwf22, cwf23, cwf24, cwf25, cwf26, cyp7/cwf27, cwf28, cwf29/ist3, lea1, msl1, prp5/cwf1, prp10, prp12/sap130, prp17, prp22, sap61, sap62, sap114, sap145, slu7, smb1, smd1, smd3, smf1, smg1 and syf2.

It is found in the nucleus. In terms of biological role, involved in mRNA splicing. The sequence is that of Pre-mRNA-splicing factor cwf7 (cwf7) from Schizosaccharomyces pombe (strain 972 / ATCC 24843) (Fission yeast).